A 398-amino-acid chain; its full sequence is Na(+)/H(+) antiporter NhaA (398 aa).

12 helical membrane-spanning segments follow: residues 9 to 29 (MITHPAAGGVLLFAAALAAIV), 57 to 77 (LSLLVLVNDGLMAVFFLAVGL), 95 to 115 (AFPAIAALGGMVAPAVIYSLM), 124 to 144 (AGWAIPAATDIAFAVGVLALL), 154 to 174 (VFMLALAIIDDLGAIVIIALF), 177 to 197 (TALEPLALAAAGAVIGIMALM), 204 to 224 (FLSLYLLLGAVLWGCILLSGI), 226 to 246 (ATLAGVVVGGLIPLTLPSTEV), 255 to 275 (WLQPWVVYLILPLFAFANAGI), 288 to 308 (FLPLGIAAGLVVGKPLGIVLF), 329 to 349 (IAAAAMLCGIGFTMSIFIANL), and 359 to 379 (IVLAKVGILSGSVIAALLGYL).

Belongs to the NhaA Na(+)/H(+) (TC 2.A.33) antiporter family.

The protein localises to the cell inner membrane. The enzyme catalyses Na(+)(in) + 2 H(+)(out) = Na(+)(out) + 2 H(+)(in). Functionally, na(+)/H(+) antiporter that extrudes sodium in exchange for external protons. The chain is Na(+)/H(+) antiporter NhaA from Sodalis glossinidius (strain morsitans).